Here is a 922-residue protein sequence, read N- to C-terminus: Coronin-7 (922 aa).

WD repeat units follow at residues 75–115 (CHSD…EALP), 124–163 (PEEL…HLTE), 166–205 (AHKD…QASQ), and 209–253 (AHEN…SALA). Positions 386–462 (NPAHRPHPRF…TSPSQRSLQS (77 aa)) are disordered. The span at 423-456 (SEGFSSPSSLVSPSTPSSLGLSLSSTSGIGTSPS) shows a compositional bias: low complexity. Phosphoserine occurs at positions 459 and 462. A Glycyl lysine isopeptide (Lys-Gly) (interchain with G-Cter in ubiquitin) cross-link involves residue K469. 4 WD repeats span residues 539-579 (QNGA…LKNV), 589-629 (GHTE…EQLR), 632-671 (GHQD…LPLQ), and 725-765 (DVAP…PFFL). The interval 854–922 (LQPPGMTPVS…FEGVDEDEWD (69 aa)) is disordered. T874 carries the phosphothreonine modification. Residues 881-893 (LEEKSDQQKKEEL) are compositionally biased toward basic and acidic residues. S912 is subject to Phosphoserine.

This sequence belongs to the WD repeat coronin family. Interacts with clathrin adapter AP1 complex. This interaction takes place at Golgi membranes and not AP1-positive endosomal membranes. Interacts (when ubiquitinated at Lys-469) with EPS15. In terms of processing, the membrane-associated form is phosphorylated on tyrosine residues. Ubiquitinated via 'Lys-33'-linked ubiquitin chains by the BCR(KLHL20) E3 ubiquitin ligase complex: 'Lys-33'-linked ubiquitination promotes interaction with EPS15 and facilitates actin polymerization at the trans-Golgi network, thereby facilitating post-Golgi trafficking. Deubiquitinated by ZRANB1/TRABID.

Its subcellular location is the golgi apparatus membrane. It localises to the golgi apparatus. The protein resides in the trans-Golgi network. It is found in the cytoplasmic vesicle. The protein localises to the cytoplasm. Its subcellular location is the cytosol. Functionally, F-actin regulator involved in anterograde Golgi to endosome transport: upon ubiquitination via 'Lys-33'-linked ubiquitin chains by the BCR(KLHL20) E3 ubiquitin ligase complex, interacts with EPS15 and localizes to the trans-Golgi network, where it promotes actin polymerization, thereby facilitating post-Golgi trafficking. May play a role in the maintenance of the Golgi apparatus morphology. The polypeptide is Coronin-7 (Coro7) (Rattus norvegicus (Rat)).